Reading from the N-terminus, the 307-residue chain is Trehalose transport system permease protein SugA (307 aa).

A run of 6 helical transmembrane segments spans residues 25–45, 89–109, 123–143, 168–188, 217–237, and 272–292; these read LAFM…AYPI, LAIT…LALV, AVLI…YYAW, LGIV…LLLL, ILPM…LDAF, and LGSA…FIFI. One can recognise an ABC transmembrane type-1 domain in the interval 85–291; sequence LAVTLAITAV…GCVAVIAFIF (207 aa).

The protein belongs to the binding-protein-dependent transport system permease family. The complex is composed of two ATP-binding proteins (SugC), two transmembrane proteins (Suga and SugB) and a solute-binding protein (LpqY).

It is found in the cell inner membrane. Its function is as follows. Part of the ABC transporter complex LpqY-SugA-SugB-SugC, which is highly specific for uptake of trehalose. Involved in the recycling of extracellular trehalose released from trehalose-containing molecules synthesized by M.tuberculosis. Trehalose uptake is essential for virulence. Probably responsible for the translocation of the substrate across the membrane. The sequence is that of Trehalose transport system permease protein SugA (sugA) from Mycobacterium tuberculosis (strain CDC 1551 / Oshkosh).